Reading from the N-terminus, the 473-residue chain is Uronate isomerase (473 aa).

It belongs to the metallo-dependent hydrolases superfamily. Uronate isomerase family.

It carries out the reaction D-glucuronate = D-fructuronate. The catalysed reaction is aldehydo-D-galacturonate = keto-D-tagaturonate. It functions in the pathway carbohydrate metabolism; pentose and glucuronate interconversion. The protein is Uronate isomerase (uxaC) of Bacillus subtilis (strain 168).